Here is a 135-residue protein sequence, read N- to C-terminus: ATP synthase epsilon chain (135 aa).

Belongs to the ATPase epsilon chain family. F-type ATPases have 2 components, CF(1) - the catalytic core - and CF(0) - the membrane proton channel. CF(1) has five subunits: alpha(3), beta(3), gamma(1), delta(1), epsilon(1). CF(0) has three main subunits: a, b and c.

The protein resides in the cellular thylakoid membrane. In terms of biological role, produces ATP from ADP in the presence of a proton gradient across the membrane. The protein is ATP synthase epsilon chain of Prochlorococcus marinus (strain NATL1A).